The chain runs to 454 residues: UPF0210 protein Memar_2269 (454 aa).

Belongs to the UPF0210 family.

This is UPF0210 protein Memar_2269 from Methanoculleus marisnigri (strain ATCC 35101 / DSM 1498 / JR1).